Consider the following 320-residue polypeptide: UDP-3-O-acyl-N-acetylglucosamine deacetylase (320 aa).

His-92, His-251, and Asp-255 together coordinate Zn(2+). His-278 functions as the Proton donor in the catalytic mechanism.

Belongs to the LpxC family. The cofactor is Zn(2+).

It carries out the reaction a UDP-3-O-[(3R)-3-hydroxyacyl]-N-acetyl-alpha-D-glucosamine + H2O = a UDP-3-O-[(3R)-3-hydroxyacyl]-alpha-D-glucosamine + acetate. The protein operates within glycolipid biosynthesis; lipid IV(A) biosynthesis; lipid IV(A) from (3R)-3-hydroxytetradecanoyl-[acyl-carrier-protein] and UDP-N-acetyl-alpha-D-glucosamine: step 2/6. Functionally, catalyzes the hydrolysis of UDP-3-O-myristoyl-N-acetylglucosamine to form UDP-3-O-myristoylglucosamine and acetate, the committed step in lipid A biosynthesis. This is UDP-3-O-acyl-N-acetylglucosamine deacetylase from Psychrobacter cryohalolentis (strain ATCC BAA-1226 / DSM 17306 / VKM B-2378 / K5).